The following is a 343-amino-acid chain: Uroporphyrinogen decarboxylase (343 aa).

Residues 25-29 (RQAGR), Phe44, Asp75, Tyr150, Ser205, and His320 contribute to the substrate site.

The protein belongs to the uroporphyrinogen decarboxylase family. Homodimer.

The protein localises to the cytoplasm. The enzyme catalyses uroporphyrinogen III + 4 H(+) = coproporphyrinogen III + 4 CO2. It functions in the pathway porphyrin-containing compound metabolism; protoporphyrin-IX biosynthesis; coproporphyrinogen-III from 5-aminolevulinate: step 4/4. Catalyzes the decarboxylation of four acetate groups of uroporphyrinogen-III to yield coproporphyrinogen-III. The protein is Uroporphyrinogen decarboxylase of Mesorhizobium japonicum (strain LMG 29417 / CECT 9101 / MAFF 303099) (Mesorhizobium loti (strain MAFF 303099)).